Reading from the N-terminus, the 280-residue chain is Chaperone protein DnaJ 2 (280 aa).

Positions 6-70 (DYYAILGVPR…EKRRIYDTYG (65 aa)) constitute a J domain.

This sequence belongs to the DnaJ family. As to quaternary structure, forms a heterononamer with DnaJ and DafA in the resting state. Three copies of each protein are present in the complex.

The protein localises to the cytoplasm. Does not influence ATP binding or hydrolysis nor ADP release. Exerts influence on the interaction of DnaK with substrates; in the presence of DafA, DnaJ inhibits substrate binding, and substrate already bound to DnaK is displaced by DnaJ and DafA. This is Chaperone protein DnaJ 2 (dnaJ2) from Thermus thermophilus (strain ATCC 27634 / DSM 579 / HB8).